The following is a 326-amino-acid chain: MSDGAGAAARRWGKCGGRSCSRESIMVAFKGVWTQAFWKAVTAEFLAMLIFVLLSVGSTINWGGSENPLPVDMVLISLCFGLSIATMVQCFGHISGGHINPAVTVAMVCTRKISIAKSVFYITAQCLGAIIGAGILYLVTPPNVVGGLGVTTVHGNLTAGHGLLVELIITFQLVFTIFASCDSKRTDVTGSIALAIGFSVAIGHLFAINYTGASMNPARSFGPAVIMGNWENHWIYWVGPIIGAVLAGALYEYVFCPDVELKRRLKEAFSKAAQQTKGSYTEVEDNRSQVETEDLILKPGVVHVIDIDRGEDKKGKDSAGEVLSSV.

Residues 1 to 39 (MSDGAGAAARRWGKCGGRSCSRESIMVAFKGVWTQAFWK) are Cytoplasmic-facing. 2 S-palmitoyl cysteine lipidation sites follow: Cys15 and Cys20. A helical membrane pass occupies residues 40 to 60 (AVTAEFLAMLIFVLLSVGSTI). At 61 to 72 (NWGGSENPLPVD) the chain is on the extracellular side. The helical transmembrane segment at 73–92 (MVLISLCFGLSIATMVQCFG) threads the bilayer. Residues 93–96 (HISG) are Cytoplasmic-facing. The discontinuously helical intramembrane region spans 97–104 (GHINPAVT). Positions 100–102 (NPA) match the NPA 1 motif. Residues 105–118 (VAMVCTRKISIAKS) lie on the Cytoplasmic side of the membrane. Ser114 carries the phosphoserine; by PKG modification. Residues 119 to 139 (VFYITAQCLGAIIGAGILYLV) traverse the membrane as a helical segment. Residues 140–158 (TPPNVVGGLGVTTVHGNLT) are Extracellular-facing. The N-linked (GlcNAc...) asparagine glycan is linked to Asn156. The chain crosses the membrane as a helical span at residues 159 to 179 (AGHGLLVELIITFQLVFTIFA). The Cytoplasmic segment spans residues 180–187 (SCDSKRTD). Phosphoserine; by PKC is present on Ser183. Residues 188 to 208 (VTGSIALAIGFSVAIGHLFAI) form a helical membrane-spanning segment. N-linked (GlcNAc...) asparagine glycosylation occurs at Asn209. Over 209 to 211 (NYT) the chain is Extracellular. The segment at residues 212 to 225 (GASMNPARSFGPAV) is an intramembrane region (discontinuously helical). Positions 216–218 (NPA) match the NPA 2 motif. Residues 226–234 (IMGNWENHW) lie on the Extracellular side of the membrane. The chain crosses the membrane as a helical span at residues 235-255 (IYWVGPIIGAVLAGALYEYVF). The Cytoplasmic portion of the chain corresponds to 256–326 (CPDVELKRRL…DSAGEVLSSV (71 aa)). Ser279 and Ser288 each carry phosphoserine. Thr292 bears the Phosphothreonine mark. Ser324 is subject to Phosphoserine.

It belongs to the MIP/aquaporin (TC 1.A.8) family. As to quaternary structure, homotetramer. The tetramers can form oligomeric arrays in membranes. The size of the oligomers differs between tissues and is smaller in skeletal muscle than in brain. Interaction between AQP4 oligomeric arrays in close-by cells can contribute to cell-cell adhesion. Part of a complex containing MLC1, TRPV4, HEPACAM and ATP1B1. Post-translationally, phosphorylation by PKC at Ser-183 reduces conductance by 50%. Phosphorylation by PKG at Ser-114 in response to glutamate increases conductance by 40%. In terms of processing, isoform Long: Palmitoylated on its N-terminal region.

It localises to the cell membrane. Its subcellular location is the basolateral cell membrane. The protein localises to the endosome membrane. The protein resides in the sarcolemma. It is found in the cell projection. It carries out the reaction H2O(in) = H2O(out). In terms of biological role, forms a water-specific channel. Plays an important role in brain water homeostasis and in glymphatic solute transport. Required for a normal rate of water exchange across the blood brain interface. Required for normal levels of cerebrospinal fluid influx into the brain cortex and parenchyma along paravascular spaces that surround penetrating arteries, and for normal drainage of interstitial fluid along paravenous drainage pathways. Thereby, it is required for normal clearance of solutes from the brain interstitial fluid, including soluble beta-amyloid peptides derived from APP. Plays a redundant role in urinary water homeostasis and urinary concentrating ability. This chain is Aquaporin-4 (AQP4), found in Notomys alexis (Spinifex hopping mouse).